We begin with the raw amino-acid sequence, 947 residues long: Protein translocase subunit SecA (947 aa).

Residues Q87, 105-109, and D525 each bind ATP; that span reads GEGKT. A disordered region spans residues 905 to 928; the sequence is PADNADKTARNPNDPSTWGKVGRN. C931, C933, C942, and H943 together coordinate Zn(2+).

Belongs to the SecA family. Monomer and homodimer. Part of the essential Sec protein translocation apparatus which comprises SecA, SecYEG and auxiliary proteins SecDF-YajC and YidC. It depends on Zn(2+) as a cofactor.

It is found in the cell inner membrane. Its subcellular location is the cytoplasm. The catalysed reaction is ATP + H2O + cellular proteinSide 1 = ADP + phosphate + cellular proteinSide 2.. In terms of biological role, part of the Sec protein translocase complex. Interacts with the SecYEG preprotein conducting channel. Has a central role in coupling the hydrolysis of ATP to the transfer of proteins into and across the cell membrane, serving both as a receptor for the preprotein-SecB complex and as an ATP-driven molecular motor driving the stepwise translocation of polypeptide chains across the membrane. The polypeptide is Protein translocase subunit SecA (Rhodopseudomonas palustris (strain BisB18)).